Consider the following 339-residue polypeptide: Nucleoid-associated protein Asuc_0779 (339 aa).

The protein belongs to the YejK family.

It is found in the cytoplasm. Its subcellular location is the nucleoid. In Actinobacillus succinogenes (strain ATCC 55618 / DSM 22257 / CCUG 43843 / 130Z), this protein is Nucleoid-associated protein Asuc_0779.